Reading from the N-terminus, the 493-residue chain is Ribose import ATP-binding protein RbsA (493 aa).

2 ABC transporter domains span residues 5 to 241 (LKIS…VGRR) and 252 to 491 (EKGE…AAAI). 37–44 (GENGAGKS) serves as a coordination point for ATP.

It belongs to the ABC transporter superfamily. Ribose importer (TC 3.A.1.2.1) family. As to quaternary structure, the complex is composed of an ATP-binding protein (RbsA), two transmembrane proteins (RbsC) and a solute-binding protein (RbsB).

Its subcellular location is the cell inner membrane. The catalysed reaction is D-ribose(out) + ATP + H2O = D-ribose(in) + ADP + phosphate + H(+). Its function is as follows. Part of the ABC transporter complex RbsABC involved in ribose import. Responsible for energy coupling to the transport system. The sequence is that of Ribose import ATP-binding protein RbsA from Haemophilus influenzae (strain 86-028NP).